The primary structure comprises 198 residues: MFLYTENFDEQKEKAMEGLRKALEEDKVDHDIIPLLEKINALQNYFTTSSCSGRISVMEMPHFGDKVNSVWLGKWHREVRLEEVLEAVGKHRSGQLWFLVRSPILHVGARTLEDAVRLLNLAIGLGFKYSNIKSVSHKKLVVEIRSTERMDVPLGENGELWVDEAYIEKIVNLANAQVRRFKGKLKRLEEEIEKLQED.

The protein belongs to the TYW3 family.

It catalyses the reaction 4-demethyl-7-[(3S)-3-amino-3-carboxypropyl]wyosine(37) in tRNA(Phe) + S-adenosyl-L-methionine = 7-[(3S)-3-amino-3-carboxypropyl]wyosine(37) in tRNA(Phe) + S-adenosyl-L-homocysteine + H(+). Functionally, S-adenosyl-L-methionine-dependent methyltransferase that acts as a component of the wyosine derivatives biosynthesis pathway. Probably methylates N-4 position of wybutosine-86 to produce wybutosine-72. The chain is tRNA(Phe) 7-((3-amino-3-carboxypropyl)-4-demethylwyosine(37)-N(4))-methyltransferase 1 from Thermococcus kodakarensis (strain ATCC BAA-918 / JCM 12380 / KOD1) (Pyrococcus kodakaraensis (strain KOD1)).